We begin with the raw amino-acid sequence, 50 residues long: Peroxiredoxin-6 (50 aa).

The Thioredoxin domain occupies aspartate 1–arginine 50. At threonine 3 the chain carries Phosphothreonine. Cysteine 6 acts as the Cysteine sulfenic acid (-SOH) intermediate; for peroxidase activity in catalysis. Residue lysine 19 is modified to N6-acetyllysine. The active-site For phospholipase activity is aspartate 28.

The protein belongs to the peroxiredoxin family. Prx6 subfamily. Homodimer. Interacts with GSTP1; mediates PRDX6 glutathionylation and regeneration. Interacts with APEX1. Interacts with STH. May interact with FAM168B. May interact with HTR2A. Irreversibly inactivated by overoxidation of Cys-6 to sulfinic acid (Cys-SO(2)H) and sulfonic acid (Cys-SO(3)H) forms upon oxidative stress. Post-translationally, phosphorylation at Thr-177 by MAP kinases increases the phospholipase activity of the enzyme. The phosphorylated form exhibits a greater lysophosphatidylcholine acyltransferase activity compared to the non-phosphorylated form.

The protein localises to the cytoplasm. The protein resides in the lysosome. The enzyme catalyses a hydroperoxide + 2 glutathione = an alcohol + glutathione disulfide + H2O. The catalysed reaction is a 1,2-diacyl-sn-glycero-3-phosphocholine + H2O = a 1-acyl-sn-glycero-3-phosphocholine + a fatty acid + H(+). It catalyses the reaction a 1-acyl-sn-glycero-3-phosphocholine + an acyl-CoA = a 1,2-diacyl-sn-glycero-3-phosphocholine + CoA. It carries out the reaction 1-hexadecanoyl-sn-glycero-3-phosphocholine + hexadecanoyl-CoA = 1,2-dihexadecanoyl-sn-glycero-3-phosphocholine + CoA. The enzyme catalyses 1,2-dihexadecanoyl-sn-glycero-3-phosphocholine + H2O = 1-hexadecanoyl-sn-glycero-3-phosphocholine + hexadecanoate + H(+). In terms of biological role, thiol-specific peroxidase that catalyzes the reduction of hydrogen peroxide and organic hydroperoxides to water and alcohols, respectively. Can reduce H(2)O(2) and short chain organic, fatty acid, and phospholipid hydroperoxides. Also has phospholipase activity, and can therefore either reduce the oxidized sn-2 fatty acyl group of phospholipids (peroxidase activity) or hydrolyze the sn-2 ester bond of phospholipids (phospholipase activity). These activities are dependent on binding to phospholipids at acidic pH and to oxidized phospholipds at cytosolic pH. Plays a role in cell protection against oxidative stress by detoxifying peroxides and in phospholipid homeostasis. Exhibits acyl-CoA-dependent lysophospholipid acyltransferase which mediates the conversion of lysophosphatidylcholine (1-acyl-sn-glycero-3-phosphocholine or LPC) into phosphatidylcholine (1,2-diacyl-sn-glycero-3-phosphocholine or PC). Shows a clear preference for LPC as the lysophospholipid and for palmitoyl CoA as the fatty acyl substrate. This Mesocricetus auratus (Golden hamster) protein is Peroxiredoxin-6.